The sequence spans 188 residues: MFNFTRQYSVKDGLITDELASHIVENLPARYASAETWKRIYSLQHDGASLQTMYLACEKEKARSGHPKGACILAVRDTDGDVFGVFIPDYLIPAPHYFGSEETFLWKYFPPKKYVHYPFVGNSNFVAYCTKSFLAFGGGNGRYSLWLDGSLEYAYSSRTPAFENNPLSYRGCPDQRIQIVDIELWVLE.

Positions 13-188 constitute a TLDc domain; the sequence is GLITDELASH…IVDIELWVLE (176 aa).

Belongs to the OXR1 family.

It is found in the mitochondrion. It localises to the cytoplasm. Its subcellular location is the nucleus. In terms of biological role, may be involved in protection from oxidative damage. Has a role in meiosis. The sequence is that of Oxidation resistance protein 1 (oxr1) from Schizosaccharomyces pombe (strain 972 / ATCC 24843) (Fission yeast).